Here is a 360-residue protein sequence, read N- to C-terminus: DNA polymerase IV (360 aa).

The UmuC domain maps to 8–191 (VLHVDMDSFF…LPVGRIPGIG (184 aa)). Mg(2+) contacts are provided by Asp12 and Asp110. Glu111 is a catalytic residue.

This sequence belongs to the DNA polymerase type-Y family. In terms of assembly, monomer. The cofactor is Mg(2+).

It localises to the cytoplasm. It catalyses the reaction DNA(n) + a 2'-deoxyribonucleoside 5'-triphosphate = DNA(n+1) + diphosphate. Poorly processive, error-prone DNA polymerase involved in untargeted mutagenesis. Copies undamaged DNA at stalled replication forks, which arise in vivo from mismatched or misaligned primer ends. These misaligned primers can be extended by PolIV. Exhibits no 3'-5' exonuclease (proofreading) activity. May be involved in translesional synthesis. In Methanoculleus marisnigri (strain ATCC 35101 / DSM 1498 / JR1), this protein is DNA polymerase IV.